Consider the following 258-residue polypeptide: Pimeloyl-[acyl-carrier protein] methyl ester esterase (258 aa).

Positions 16–242 (LVLLHGWGLN…AAHAPFISHP (227 aa)) constitute an AB hydrolase-1 domain. Residues Trp22, 82-83 (SL), and 143-147 (FLALQ) each bind substrate. The active-site Nucleophile is the Ser82. Catalysis depends on residues Asp207 and His235. Position 235 (His235) interacts with substrate.

It belongs to the AB hydrolase superfamily. Carboxylesterase BioH family. In terms of assembly, monomer.

It is found in the cytoplasm. It catalyses the reaction 6-carboxyhexanoyl-[ACP] methyl ester + H2O = 6-carboxyhexanoyl-[ACP] + methanol + H(+). The protein operates within cofactor biosynthesis; biotin biosynthesis. Functionally, the physiological role of BioH is to remove the methyl group introduced by BioC when the pimeloyl moiety is complete. It allows to synthesize pimeloyl-ACP via the fatty acid synthetic pathway through the hydrolysis of the ester bonds of pimeloyl-ACP esters. This is Pimeloyl-[acyl-carrier protein] methyl ester esterase from Edwardsiella ictaluri (strain 93-146).